Consider the following 250-residue polypeptide: tRNA (guanine-N(1)-)-methyltransferase (250 aa).

Residues G116 and 136–141 contribute to the S-adenosyl-L-methionine site; that span reads IGDYVL.

It belongs to the RNA methyltransferase TrmD family. In terms of assembly, homodimer.

The protein localises to the cytoplasm. It carries out the reaction guanosine(37) in tRNA + S-adenosyl-L-methionine = N(1)-methylguanosine(37) in tRNA + S-adenosyl-L-homocysteine + H(+). Specifically methylates guanosine-37 in various tRNAs. The sequence is that of tRNA (guanine-N(1)-)-methyltransferase from Pseudomonas putida (strain ATCC 700007 / DSM 6899 / JCM 31910 / BCRC 17059 / LMG 24140 / F1).